A 119-amino-acid polypeptide reads, in one-letter code: Small ribosomal subunit protein bS16 (119 aa).

Belongs to the bacterial ribosomal protein bS16 family.

The chain is Small ribosomal subunit protein bS16 from Chlamydia abortus (strain DSM 27085 / S26/3) (Chlamydophila abortus).